Here is a 125-residue protein sequence, read N- to C-terminus: uncharacterized protein (125 aa).

It localises to the plastid. This is an uncharacterized protein from Euglena longa (Euglenophycean alga).